The chain runs to 251 residues: 1-(5-phosphoribosyl)-5-[(5-phosphoribosylamino)methylideneamino] imidazole-4-carboxamide isomerase (251 aa).

The Proton acceptor role is filled by D8. D131 acts as the Proton donor in catalysis.

It belongs to the HisA/HisF family.

It is found in the cytoplasm. The enzyme catalyses 1-(5-phospho-beta-D-ribosyl)-5-[(5-phospho-beta-D-ribosylamino)methylideneamino]imidazole-4-carboxamide = 5-[(5-phospho-1-deoxy-D-ribulos-1-ylimino)methylamino]-1-(5-phospho-beta-D-ribosyl)imidazole-4-carboxamide. Its pathway is amino-acid biosynthesis; L-histidine biosynthesis; L-histidine from 5-phospho-alpha-D-ribose 1-diphosphate: step 4/9. The polypeptide is 1-(5-phosphoribosyl)-5-[(5-phosphoribosylamino)methylideneamino] imidazole-4-carboxamide isomerase (Burkholderia pseudomallei (strain 1710b)).